A 271-amino-acid chain; its full sequence is uncharacterized protein (271 aa).

3 helical membrane passes run 11–33 (GWLA…LAPW), 172–194 (SINT…LQLI), and 214–236 (FLSY…GYFA). The segment at 245-271 (REKAGSPPPDKPMTVEQKLADRYGRRR) is disordered. The span at 262 to 271 (KLADRYGRRR) shows a compositional bias: basic and acidic residues.

Belongs to the SURF1 family.

The protein localises to the cell membrane. This is an uncharacterized protein from Mycobacterium tuberculosis (strain CDC 1551 / Oshkosh).